The sequence spans 194 residues: Ribonuclease HII (194 aa).

The region spanning 3 to 193 (ILTAGVDEAG…VRNLLAQQAL (191 aa)) is the RNase H type-2 domain. A divalent metal cation contacts are provided by Asp9, Glu10, and Asp101.

It belongs to the RNase HII family. Mn(2+) serves as cofactor. It depends on Mg(2+) as a cofactor.

It localises to the cytoplasm. It catalyses the reaction Endonucleolytic cleavage to 5'-phosphomonoester.. Functionally, endonuclease that specifically degrades the RNA of RNA-DNA hybrids. This is Ribonuclease HII (rnhB) from Neisseria meningitidis serogroup B (strain ATCC BAA-335 / MC58).